A 456-amino-acid polypeptide reads, in one-letter code: Bifunctional protein GlmU (456 aa).

A pyrophosphorylase region spans residues 1 to 229 (MLNNAMSVVI…LSEVEGVNNR (229 aa)). Residues 11–14 (LAAG), Lys-25, Gln-76, 81–82 (GT), 103–105 (YGD), Gly-140, Glu-154, Asn-169, and Asn-227 each bind UDP-N-acetyl-alpha-D-glucosamine. Mg(2+) is bound at residue Asp-105. Residue Asn-227 participates in Mg(2+) binding. The segment at 230–250 (LQLSRLERVYQSEQAEKLLLA) is linker. Residues 251 to 456 (GVMLRDPARF…EGWRRPVKKK (206 aa)) form an N-acetyltransferase region. The UDP-N-acetyl-alpha-D-glucosamine site is built by Arg-333 and Lys-351. His-363 acts as the Proton acceptor in catalysis. 2 residues coordinate UDP-N-acetyl-alpha-D-glucosamine: Tyr-366 and Asn-377. Residues Ala-380, 386 to 387 (NY), Ser-405, Ala-423, and Arg-440 contribute to the acetyl-CoA site.

In the N-terminal section; belongs to the N-acetylglucosamine-1-phosphate uridyltransferase family. This sequence in the C-terminal section; belongs to the transferase hexapeptide repeat family. Homotrimer. Mg(2+) is required as a cofactor.

It localises to the cytoplasm. The enzyme catalyses alpha-D-glucosamine 1-phosphate + acetyl-CoA = N-acetyl-alpha-D-glucosamine 1-phosphate + CoA + H(+). It catalyses the reaction N-acetyl-alpha-D-glucosamine 1-phosphate + UTP + H(+) = UDP-N-acetyl-alpha-D-glucosamine + diphosphate. Its pathway is nucleotide-sugar biosynthesis; UDP-N-acetyl-alpha-D-glucosamine biosynthesis; N-acetyl-alpha-D-glucosamine 1-phosphate from alpha-D-glucosamine 6-phosphate (route II): step 2/2. The protein operates within nucleotide-sugar biosynthesis; UDP-N-acetyl-alpha-D-glucosamine biosynthesis; UDP-N-acetyl-alpha-D-glucosamine from N-acetyl-alpha-D-glucosamine 1-phosphate: step 1/1. It participates in bacterial outer membrane biogenesis; LPS lipid A biosynthesis. Its function is as follows. Catalyzes the last two sequential reactions in the de novo biosynthetic pathway for UDP-N-acetylglucosamine (UDP-GlcNAc). The C-terminal domain catalyzes the transfer of acetyl group from acetyl coenzyme A to glucosamine-1-phosphate (GlcN-1-P) to produce N-acetylglucosamine-1-phosphate (GlcNAc-1-P), which is converted into UDP-GlcNAc by the transfer of uridine 5-monophosphate (from uridine 5-triphosphate), a reaction catalyzed by the N-terminal domain. The protein is Bifunctional protein GlmU of Shigella boydii serotype 4 (strain Sb227).